The primary structure comprises 904 residues: Protein translocase subunit SecA (904 aa).

ATP is bound by residues Gln89, 107–111 (GEGKT), and Asp496. The interval 870-904 (GGFQELSSGTPSPTVTVTTSSGGGTERKTSRRRKR) is disordered. Residues 876–889 (SSGTPSPTVTVTTS) are compositionally biased toward low complexity.

The protein belongs to the SecA family. Monomer and homodimer. Part of the essential Sec protein translocation apparatus which comprises SecA, SecYEG and auxiliary proteins SecDF. Other proteins may also be involved.

The protein localises to the cell inner membrane. Its subcellular location is the cytoplasm. It carries out the reaction ATP + H2O + cellular proteinSide 1 = ADP + phosphate + cellular proteinSide 2.. Functionally, part of the Sec protein translocase complex. Interacts with the SecYEG preprotein conducting channel. Has a central role in coupling the hydrolysis of ATP to the transfer of proteins into and across the cell membrane, serving as an ATP-driven molecular motor driving the stepwise translocation of polypeptide chains across the membrane. The chain is Protein translocase subunit SecA from Leptospira borgpetersenii serovar Hardjo-bovis (strain L550).